Reading from the N-terminus, the 426-residue chain is Histidine--tRNA ligase (426 aa).

The protein belongs to the class-II aminoacyl-tRNA synthetase family. In terms of assembly, homodimer.

Its subcellular location is the cytoplasm. It carries out the reaction tRNA(His) + L-histidine + ATP = L-histidyl-tRNA(His) + AMP + diphosphate + H(+). This Pseudoalteromonas atlantica (strain T6c / ATCC BAA-1087) protein is Histidine--tRNA ligase.